Reading from the N-terminus, the 1099-residue chain is DNA-directed RNA polymerase subunit beta (1099 aa).

This sequence belongs to the RNA polymerase beta chain family. In plastids the minimal PEP RNA polymerase catalytic core is composed of four subunits: alpha, beta, beta', and beta''. When a (nuclear-encoded) sigma factor is associated with the core the holoenzyme is formed, which can initiate transcription.

The protein localises to the plastid. It is found in the chloroplast. The enzyme catalyses RNA(n) + a ribonucleoside 5'-triphosphate = RNA(n+1) + diphosphate. DNA-dependent RNA polymerase catalyzes the transcription of DNA into RNA using the four ribonucleoside triphosphates as substrates. The chain is DNA-directed RNA polymerase subunit beta from Bigelowiella natans (Pedinomonas minutissima).